We begin with the raw amino-acid sequence, 780 residues long: ATP-dependent 6-phosphofructokinase, liver type (780 aa).

Position 2 is an N-acetylalanine (Ala-2). Residues 2–390 are N-terminal catalytic PFK domain 1; that stretch reads AAVDLEKLRA…NWNIYKLLAH (389 aa). ATP is bound by residues Gly-25, 88–89, and 118–121; these read RC and GDGS. Residue Asp-119 coordinates Mg(2+). Residues 164–166, Arg-201, 208–210, Glu-264, Arg-292, and 298–301 contribute to the substrate site; these read SID, MGR, and HVQR. Asp-166 (proton acceptor) is an active-site residue. Ser-377 carries the post-translational modification Phosphoserine. The segment at 391-400 is interdomain linker; sequence QKPPKEKSNF. A C-terminal regulatory PFK domain 2 region spans residues 401–780; that stretch reads SLAILNVGAP…RRTLSMDKGF (380 aa). Beta-D-fructose 2,6-bisphosphate contacts are provided by residues Arg-470, 527-531, Arg-565, 572-574, and Glu-628; these read TISNN and MGG. O-linked (GlcNAc) serine glycosylation occurs at Ser-529. At Tyr-640 the chain carries Phosphotyrosine. Residues Arg-654, 660-663, and Arg-734 contribute to the beta-D-fructose 2,6-bisphosphate site; that span reads HLQQ. A Phosphoserine modification is found at Ser-775.

It belongs to the phosphofructokinase type A (PFKA) family. ATP-dependent PFK group I subfamily. Eukaryotic two domain clade 'E' sub-subfamily. As to quaternary structure, homo- and heterotetramers. Phosphofructokinase (PFK) enzyme functions as a tetramer composed of different combinations of 3 types of subunits, called PFKM (M), PFKL (L) and PFKP (P). The composition of the PFK tetramer differs according to the tissue type it is present in. The kinetic and regulatory properties of the tetrameric enzyme are dependent on the subunit composition, hence can vary across tissues. Mg(2+) serves as cofactor. Post-translationally, glcNAcylation at Ser-529 by OGT decreases enzyme activity, leading to redirect glucose flux through the oxidative pentose phosphate pathway. Glycosylation is stimulated by both hypoxia and glucose deprivation.

The protein localises to the cytoplasm. The enzyme catalyses beta-D-fructose 6-phosphate + ATP = beta-D-fructose 1,6-bisphosphate + ADP + H(+). The protein operates within carbohydrate degradation; glycolysis; D-glyceraldehyde 3-phosphate and glycerone phosphate from D-glucose: step 3/4. Its activity is regulated as follows. Allosterically activated by ADP, AMP, or fructose 2,6-bisphosphate, and allosterically inhibited by ATP or citrate. GlcNAcylation by OGT overcomes allosteric regulation. Functionally, catalyzes the phosphorylation of D-fructose 6-phosphate to fructose 1,6-bisphosphate by ATP, the first committing step of glycolysis. Negatively regulates the phagocyte oxidative burst in response to bacterial infection by controlling cellular NADPH biosynthesis and NADPH oxidase-derived reactive oxygen species. Upon macrophage activation, drives the metabolic switch toward glycolysis, thus preventing glucose turnover that produces NADPH via pentose phosphate pathway. The protein is ATP-dependent 6-phosphofructokinase, liver type (PFKL) of Pongo abelii (Sumatran orangutan).